The sequence spans 285 residues: Complex I assembly factor TIMMDC1, mitochondrial (285 aa).

4 consecutive transmembrane segments (helical) span residues 80 to 100 (AALS…FIYA), 137 to 159 (RWSW…LTVY), 165 to 185 (LSHF…NLGL), and 188 to 208 (LVAG…LLMA).

The protein belongs to the Tim17/Tim22/Tim23 family. As to quaternary structure, associates with the intermediate 315 kDa subcomplex of incompletely assembled complex I. Interacts with TMEM70.

It localises to the mitochondrion membrane. Its function is as follows. Chaperone protein involved in the assembly of the mitochondrial NADH:ubiquinone oxidoreductase complex (complex I). Participates in constructing the membrane arm of complex I. This is Complex I assembly factor TIMMDC1, mitochondrial from Rattus norvegicus (Rat).